An 880-amino-acid chain; its full sequence is MSEKIIRGVKFGVLSPNEIRQMSVTAIITSEVYDEDGTPIEGGVMDPKLGVIEPGQKCPVCGNTLAGCPGHFGHIELIKPVIHIGYVKHIYDFLRSTCWRCGRIKIKEQDLERYKRIYNAIKLRWPSAARRLVEYIKKISIKNLECPHCGEKQFKIKLEKPYNFNEERNGSIVKLSPSEIRDRLERIPDSDVELLGYDPKSSRPEWMILTVLPVPPITIRPSITIESGIRAEDDLTHKLVDIIRLNERLKESIEAGAPQLIIEDLWDLLQYHVATYFDNEIPGLPPAKHRSGRPLRTLAQRLKGKEGRFRGNLSGKRVDFSARTVISPDPNLSIDEVGIPYTIARMLTVPERVTNINIERIRQYIINGPDKWPGANYVIKPDGRRIDLRYVKDRKELASSITAGYVVERHLVDGDVVLFNRQPSLHRISMMAHKVRVLPGRTFRLNLLDCPPYNADFDGDEMNLHVPQSEEAIAEARELMLVHKNIITPRYGGPIIGGGQDYISGAYLLSVKTTLLTVEEVATILGVTDFVGELGEPAILAPKPYYTGKQVISLFLPKDFNFHGPANISKGPRACKDEICPHDSFIVIKNGLLLEGVFDKKAIGNQQPESMLHWSIREYGTEYGKWLMDNVFKMFIRFLEMRGFTMTLEDITIPDEAQNEITTKIKEGYSQVDEYIRKFNEGQLEPIPGRTIEESLESYILDTLDKLRKVAGEIATKYLDPFNNVYIMAITGARGSELNITQMTALLGQQSVRGERIRRGYRERTLSLFKYGDIAPEARGFVKNSFMRGLSPYEMFFHAAGGREGLVDTAVKTSQSGYMQRRLINALSDLRIEYDGTVRSLYGDIVQVVYGDDAVHPMYSAHSKSVNVNRVIERVIGWKR.

Cys58, Cys61, Cys68, His71, Cys98, Cys101, Cys146, and Cys149 together coordinate Zn(2+). 3 residues coordinate Mg(2+): Asp456, Asp458, and Asp460. Arg573, Cys575, Cys580, His582, and Ser584 together coordinate Zn(2+).

Belongs to the RNA polymerase beta' chain family. In terms of assembly, part of the 13-subunit RNA polymerase complex. Interacts with TFS4. (Microbial infection) Binds viral protein RIP, which blocks global transcription. Mg(2+) is required as a cofactor. It depends on Zn(2+) as a cofactor.

It is found in the cytoplasm. It carries out the reaction RNA(n) + a ribonucleoside 5'-triphosphate = RNA(n+1) + diphosphate. With respect to regulation, (Microbial infection) Binds to viral protein RIP (AC Q3V4R7), which inhibits global transcription. In terms of biological role, DNA-dependent RNA polymerase (RNAP) catalyzes the transcription of DNA into RNA using the four ribonucleoside triphosphates as substrates. Forms the clamp head domain. In Sulfolobus acidocaldarius (strain ATCC 33909 / DSM 639 / JCM 8929 / NBRC 15157 / NCIMB 11770), this protein is DNA-directed RNA polymerase subunit Rpo1N.